A 632-amino-acid polypeptide reads, in one-letter code: tRNA uridine 5-carboxymethylaminomethyl modification enzyme MnmG (632 aa).

FAD is bound by residues 15–20 (GAGHAG), valine 127, and serine 182. NAD(+) is bound at residue 276 to 290 (GARYCPSIEDKIVRF). Glutamine 373 contacts FAD.

Belongs to the MnmG family. As to quaternary structure, homodimer. Heterotetramer of two MnmE and two MnmG subunits. The cofactor is FAD.

The protein resides in the cytoplasm. Its function is as follows. NAD-binding protein involved in the addition of a carboxymethylaminomethyl (cmnm) group at the wobble position (U34) of certain tRNAs, forming tRNA-cmnm(5)s(2)U34. The polypeptide is tRNA uridine 5-carboxymethylaminomethyl modification enzyme MnmG (Enterococcus faecalis (strain ATCC 700802 / V583)).